Reading from the N-terminus, the 187-residue chain is UPF0301 protein YPO0936/y3322/YP_3506 (187 aa).

The protein belongs to the UPF0301 (AlgH) family.

The chain is UPF0301 protein YPO0936/y3322/YP_3506 from Yersinia pestis.